We begin with the raw amino-acid sequence, 92 residues long: 10 kDa late embryogenesis abundant protein (92 aa).

A compositionally biased stretch (polar residues) spans 1–10 (MASQQGQQTR). The segment at 1–92 (MASQQGQQTR…GEREEEEEED (92 aa)) is disordered. Composition is skewed to basic and acidic residues over residues 11–26 (KIPE…RAAK) and 38–71 (KSLE…EMGK).

The protein belongs to the small hydrophilic plant seed protein family. Maximally expressed in dry seeds. Also present in mid-maturation embryos.

Its function is as follows. LEA proteins are late embryonic proteins abundant in higher plant seed embryos. They may play an essential role in seed survival and in controlling water exchanges during seed desiccation and imbibition. In Helianthus annuus (Common sunflower), this protein is 10 kDa late embryogenesis abundant protein.